We begin with the raw amino-acid sequence, 64 residues long: Putative calcium channel toxin Tx758 (64 aa).

Positions 1–18 are cleaved as a signal peptide; it reads MSTFVIVFLLLTAVLCHA. Positions 19–27 are excised as a propeptide; sequence EPALDETAR. 3 disulfide bridges follow: Cys29–Cys43, Cys36–Cys49, and Cys42–Cys58.

The protein belongs to the scorpion calcin-like family. In terms of tissue distribution, expressed by the venom gland.

The protein localises to the secreted. May increase intracellular calcium release through the activation of nuclear inositol 1,4,5-trisphosphate receptors (ITPR) of cardiomyocytes, thereby causing an increase in the contraction frequency of these cells. This is Putative calcium channel toxin Tx758 from Buthus israelis (Israeli scorpion).